A 220-amino-acid polypeptide reads, in one-letter code: Phosphoserine phosphatase (220 aa).

Residue Asp11 is the Nucleophile of the active site. Mg(2+) contacts are provided by Asp11 and Asp13. Residue Asp13 is the Proton donor of the active site. Substrate contacts are provided by residues Glu20, Arg56, Ser99–Gly100, and Lys144. Residue Asp167 participates in Mg(2+) binding. Asn170 is a substrate binding site.

The protein belongs to the HAD-like hydrolase superfamily. SerB family. Mg(2+) serves as cofactor.

It carries out the reaction O-phospho-L-serine + H2O = L-serine + phosphate. The enzyme catalyses O-phospho-D-serine + H2O = D-serine + phosphate. Its pathway is amino-acid biosynthesis; L-serine biosynthesis; L-serine from 3-phospho-D-glycerate: step 3/3. This is Phosphoserine phosphatase from Idiomarina loihiensis (strain ATCC BAA-735 / DSM 15497 / L2-TR).